Consider the following 105-residue polypeptide: Large ribosomal subunit protein eL36 (105 aa).

An N6-acetyllysine modification is found at lysine 62.

This sequence belongs to the eukaryotic ribosomal protein eL36 family. In terms of assembly, component of the large ribosomal subunit.

Its subcellular location is the cytoplasm. It is found in the cytosol. Functionally, component of the large ribosomal subunit. The ribosome is a large ribonucleoprotein complex responsible for the synthesis of proteins in the cell. In Homo sapiens (Human), this protein is Large ribosomal subunit protein eL36 (RPL36).